The primary structure comprises 227 residues: MPPPMIPPKLPPLEFIAAEALYSSIIFLICFLIYHRLREVYKLSDYRGFHFFSNTFLFLGLAYFLRFVVLLLSASGVMFEEISLEGLRGIMAFSMAFLAYSGSAAILYTIYSLLWRWLERFPGEVVINGVALVIALTSLLSRMPLVFLISQLALVFLLVAAIFVNYSHFRHESRSKRAYPLYILLFVFWLLNISLTFRFLPLEFRFAIYTLSVAVILIIAYRVLRKL.

The next 7 membrane-spanning stretches (helical) occupy residues 15-34 (FIAAEALYSSIIFLICFLIY), 55-77 (TFLFLGLAYFLRFVVLLLSASGV), 92-114 (AFSMAFLAYSGSAAILYTIYSLL), 121-140 (FPGEVVINGVALVIALTSLL), 145-167 (LVFLISQLALVFLLVAAIFVNYS), 180-202 (PLYILLFVFWLLNISLTFRFLPL), and 206-224 (FAIYTLSVAVILIIAYRVL).

The protein resides in the cell membrane. This is an uncharacterized protein from Archaeoglobus fulgidus (strain ATCC 49558 / DSM 4304 / JCM 9628 / NBRC 100126 / VC-16).